The primary structure comprises 377 residues: Succinyl-diaminopimelate desuccinylase (377 aa).

Residue histidine 66 participates in Zn(2+) binding. Residue aspartate 68 is part of the active site. Position 99 (aspartate 99) interacts with Zn(2+). Glutamate 133 acts as the Proton acceptor in catalysis. The Zn(2+) site is built by glutamate 134, glutamate 163, and histidine 349.

It belongs to the peptidase M20A family. DapE subfamily. As to quaternary structure, homodimer. Requires Zn(2+) as cofactor. Co(2+) is required as a cofactor.

It catalyses the reaction N-succinyl-(2S,6S)-2,6-diaminopimelate + H2O = (2S,6S)-2,6-diaminopimelate + succinate. Its pathway is amino-acid biosynthesis; L-lysine biosynthesis via DAP pathway; LL-2,6-diaminopimelate from (S)-tetrahydrodipicolinate (succinylase route): step 3/3. In terms of biological role, catalyzes the hydrolysis of N-succinyl-L,L-diaminopimelic acid (SDAP), forming succinate and LL-2,6-diaminopimelate (DAP), an intermediate involved in the bacterial biosynthesis of lysine and meso-diaminopimelic acid, an essential component of bacterial cell walls. In Legionella pneumophila (strain Paris), this protein is Succinyl-diaminopimelate desuccinylase.